We begin with the raw amino-acid sequence, 148 residues long: uncharacterized protein (148 aa).

Residues 1–22 (MVQTVLNSVWLWRSVLLRLTFS) form the signal peptide.

This is an uncharacterized protein from Saccharomyces cerevisiae (strain ATCC 204508 / S288c) (Baker's yeast).